Here is a 329-residue protein sequence, read N- to C-terminus: Sex comb on midleg-like protein 1 (329 aa).

The tract at residues 136 to 160 (SYSPTLPVSRRENNSPSNLPRPSFC) is disordered. Phosphoserine occurs at positions 138 and 238. An SAM domain is found at 258–325 (WSVEAVVLFL…YYIDRLKQGK (68 aa)).

The protein belongs to the SCM family.

Its subcellular location is the nucleus. Its function is as follows. Putative Polycomb group (PcG) protein. PcG proteins act by forming multiprotein complexes, which are required to maintain the transcriptionally repressive state of homeotic genes throughout development. May be involved in spermatogenesis during sexual maturation. The chain is Sex comb on midleg-like protein 1 (SCML1) from Pongo pygmaeus (Bornean orangutan).